A 365-amino-acid chain; its full sequence is Dihydroorotate dehydrogenase (quinone) (365 aa).

Residues 61–65 (AGFDK) and serine 85 contribute to the FMN site. A substrate-binding site is contributed by lysine 65. 110-114 (NRMGF) serves as a coordination point for substrate. FMN-binding residues include asparagine 139 and asparagine 170. Asparagine 170 is a substrate binding site. Catalysis depends on serine 173, which acts as the Nucleophile. Position 175 (asparagine 175) interacts with substrate. FMN contacts are provided by lysine 214 and serine 242. A substrate-binding site is contributed by 243–244 (NT). FMN is bound by residues glycine 266, glycine 295, and 316 to 317 (YS).

It belongs to the dihydroorotate dehydrogenase family. Type 2 subfamily. Monomer. Requires FMN as cofactor.

It localises to the cell membrane. The enzyme catalyses (S)-dihydroorotate + a quinone = orotate + a quinol. Its pathway is pyrimidine metabolism; UMP biosynthesis via de novo pathway; orotate from (S)-dihydroorotate (quinone route): step 1/1. Its function is as follows. Catalyzes the conversion of dihydroorotate to orotate with quinone as electron acceptor. In Bradyrhizobium diazoefficiens (strain JCM 10833 / BCRC 13528 / IAM 13628 / NBRC 14792 / USDA 110), this protein is Dihydroorotate dehydrogenase (quinone).